The following is a 121-amino-acid chain: Large ribosomal subunit protein bL19 (121 aa).

The protein belongs to the bacterial ribosomal protein bL19 family.

In terms of biological role, this protein is located at the 30S-50S ribosomal subunit interface and may play a role in the structure and function of the aminoacyl-tRNA binding site. The protein is Large ribosomal subunit protein bL19 of Neisseria gonorrhoeae (strain ATCC 700825 / FA 1090).